The sequence spans 159 residues: Trafficking protein particle complex subunit 6A (159 aa).

Position 33 is a phosphoserine (Ser-33).

The protein belongs to the TRAPP small subunits family. BET3 subfamily. Part of the multisubunit transport protein particle (TRAPP) complex. Heterodimer with TRAPPC3. The heterodimer TRAPPC3-TRAPPC6A interacts with TRAPPC2L. Interacts with TRAPPC2L.

The protein resides in the golgi apparatus. It localises to the cis-Golgi network. The protein localises to the endoplasmic reticulum. Its function is as follows. May play a role in vesicular transport during the biogenesis of melanosomes. This chain is Trafficking protein particle complex subunit 6A, found in Homo sapiens (Human).